We begin with the raw amino-acid sequence, 490 residues long: Sporulation-specific protein 1 (490 aa).

The region spanning Y18–V272 is the Protein kinase domain. Residues I24 to V32 and K47 each bind ATP. The active-site Proton acceptor is the D141.

The protein belongs to the protein kinase superfamily. STE Ser/Thr protein kinase family. STE20 subfamily.

The protein resides in the nucleus. It is found in the cytoplasm. It catalyses the reaction L-seryl-[protein] + ATP = O-phospho-L-seryl-[protein] + ADP + H(+). The catalysed reaction is L-threonyl-[protein] + ATP = O-phospho-L-threonyl-[protein] + ADP + H(+). Functionally, serine/threonine protein kinase required for spore wall development. In Saccharomyces cerevisiae (strain ATCC 204508 / S288c) (Baker's yeast), this protein is Sporulation-specific protein 1 (SPS1).